A 364-amino-acid chain; its full sequence is Probable dual-specificity RNA methyltransferase RlmN (364 aa).

The active-site Proton acceptor is the E107. The region spanning 113–346 (HEYGNSVCVT…ATIRREQGSD (234 aa)) is the Radical SAM core domain. C120 and C351 are disulfide-bonded. [4Fe-4S] cluster-binding residues include C127, C131, and C134. S-adenosyl-L-methionine-binding positions include 177–178 (GE), S209, 232–234 (SLH), and N308. The active-site S-methylcysteine intermediate is C351.

Belongs to the radical SAM superfamily. RlmN family. Requires [4Fe-4S] cluster as cofactor.

It localises to the cytoplasm. It carries out the reaction adenosine(2503) in 23S rRNA + 2 reduced [2Fe-2S]-[ferredoxin] + 2 S-adenosyl-L-methionine = 2-methyladenosine(2503) in 23S rRNA + 5'-deoxyadenosine + L-methionine + 2 oxidized [2Fe-2S]-[ferredoxin] + S-adenosyl-L-homocysteine. The enzyme catalyses adenosine(37) in tRNA + 2 reduced [2Fe-2S]-[ferredoxin] + 2 S-adenosyl-L-methionine = 2-methyladenosine(37) in tRNA + 5'-deoxyadenosine + L-methionine + 2 oxidized [2Fe-2S]-[ferredoxin] + S-adenosyl-L-homocysteine. In terms of biological role, specifically methylates position 2 of adenine 2503 in 23S rRNA and position 2 of adenine 37 in tRNAs. Confers resistance to some classes of antibiotics. This is Probable dual-specificity RNA methyltransferase RlmN from Staphylococcus epidermidis (strain ATCC 35984 / DSM 28319 / BCRC 17069 / CCUG 31568 / BM 3577 / RP62A).